Here is a 169-residue protein sequence, read N- to C-terminus: MVNRVKRRVSCFPKATYYKPREIPLCCLETANLSIEEIEAIRLCDLLQMEQNEAADRMGISRKTFWSDLQRARQKVADALVNGKAIEISGGEYVNTGECRIHFLCKECDHVWEAKFDQSRPTSCPNCGSNLIFRLGGDGKGKRFIENDYCCPKEKESSRSTDEGSKKKR.

The protein belongs to the UPF0251 family.

The chain is UPF0251 protein MM_2090 from Methanosarcina mazei (strain ATCC BAA-159 / DSM 3647 / Goe1 / Go1 / JCM 11833 / OCM 88) (Methanosarcina frisia).